The sequence spans 339 residues: tRNA N6-adenosine threonylcarbamoyltransferase (339 aa).

The Fe cation site is built by histidine 111 and histidine 115. Substrate is bound by residues 134-138 (LVSGG), aspartate 167, glycine 180, and asparagine 272. Aspartate 300 is a binding site for Fe cation.

This sequence belongs to the KAE1 / TsaD family. It depends on Fe(2+) as a cofactor.

The protein localises to the cytoplasm. The enzyme catalyses L-threonylcarbamoyladenylate + adenosine(37) in tRNA = N(6)-L-threonylcarbamoyladenosine(37) in tRNA + AMP + H(+). Functionally, required for the formation of a threonylcarbamoyl group on adenosine at position 37 (t(6)A37) in tRNAs that read codons beginning with adenine. Is involved in the transfer of the threonylcarbamoyl moiety of threonylcarbamoyl-AMP (TC-AMP) to the N6 group of A37, together with TsaE and TsaB. TsaD likely plays a direct catalytic role in this reaction. This is tRNA N6-adenosine threonylcarbamoyltransferase from Vibrio vulnificus (strain YJ016).